We begin with the raw amino-acid sequence, 716 residues long: Myogenesis-regulating glycosidase (716 aa).

Residues 1–11 (MSQNLQETSQA) show a composition bias toward polar residues. The interval 1–26 (MSQNLQETSQAYPRHRPGSHAGPKSL) is disordered. Topologically, residues 1–55 (MSQNLQETSQAYPRHRPGSHAGPKSLKVTPRATMYTFLPDNFSPAKPKPTKELRP) are cytoplasmic. The helical; Signal-anchor for type II membrane protein transmembrane segment at 56–76 (LLCSAVLGLLLVLAAVVAWCY) threads the bilayer. Residues 77 to 716 (YSASLRKAER…DEVAYFTWAS (640 aa)) lie on the Extracellular side of the membrane. Residues Asn-239, Asn-249, and Asn-455 are each glycosylated (N-linked (GlcNAc...) asparagine). Catalysis depends on residues Asp-462 and Glu-465. Catalysis depends on Asp-527, which acts as the Proton donor.

It belongs to the glycosyl hydrolase 31 family. In terms of assembly, interacts with IGF2; this interaction is required for IGF2 secretion. As to expression, expressed in brain, liver, spleen, skeletal muscle, heart, lung and kidney. High expression is observed in the cerebellum, specifically in astrocytes. Highly expressed in skeletal muscle (at protein level).

The protein localises to the nucleus membrane. The protein resides in the endoplasmic reticulum membrane. Its function is as follows. Putative glycosidase. Promotes myogenesis by activating AKT signaling through the maturation and secretion of IGF2. This is Myogenesis-regulating glycosidase (Myorg) from Mus musculus (Mouse).